Reading from the N-terminus, the 322-residue chain is uncharacterized protein (322 aa).

2 stretches are compositionally biased toward basic residues: residues 1 to 16 (MPGN…KSGT) and 43 to 61 (LRPH…RRPV). The disordered stretch occupies residues 1 to 69 (MPGNSRRRGA…PVKRADETET (69 aa)). S-adenosyl-L-methionine contacts are provided by Gly-261, Ile-281, and Leu-290.

Belongs to the class IV-like SAM-binding methyltransferase superfamily. RNA methyltransferase TrmH family.

This is an uncharacterized protein from Mycobacterium tuberculosis (strain CDC 1551 / Oshkosh).